Reading from the N-terminus, the 283-residue chain is 2-dehydro-3-deoxyphosphooctonate aldolase (283 aa).

This sequence belongs to the KdsA family.

It is found in the cytoplasm. It catalyses the reaction D-arabinose 5-phosphate + phosphoenolpyruvate + H2O = 3-deoxy-alpha-D-manno-2-octulosonate-8-phosphate + phosphate. It participates in carbohydrate biosynthesis; 3-deoxy-D-manno-octulosonate biosynthesis; 3-deoxy-D-manno-octulosonate from D-ribulose 5-phosphate: step 2/3. Its pathway is bacterial outer membrane biogenesis; lipopolysaccharide biosynthesis. In Methylococcus capsulatus (strain ATCC 33009 / NCIMB 11132 / Bath), this protein is 2-dehydro-3-deoxyphosphooctonate aldolase.